Consider the following 463-residue polypeptide: Xanthone prenyltransferase B (463 aa).

This sequence belongs to the tryptophan dimethylallyltransferase family.

It functions in the pathway secondary metabolite biosynthesis. Its activity is regulated as follows. Mn(2+) and Co(2+) strongly enhance prenylation activity. In terms of biological role, dehydrogenase involved in the conversion of monodictyphenone to the prenyl xanthones such as emericellin, shamixanthone and epishamixanthone. Monodictyphenone is first converted to variecoxanthone A via a paeciloxanthone intermediate by the consecutive actions of the FAD-dependent monooxygenase mdpD and the xanthone prenyltransferase xptB. XptB catalyzes regular O-prenylation at the hydroxy group of C-7 of the xanthone ring. Variecoxanthone A is further prenylated to emericellin by xptA before being reduced to shamixanthone and epishamixanthone by the dehydrogenase xptC. This Emericella nidulans (strain FGSC A4 / ATCC 38163 / CBS 112.46 / NRRL 194 / M139) (Aspergillus nidulans) protein is Xanthone prenyltransferase B.